We begin with the raw amino-acid sequence, 271 residues long: Interleukin-1 alpha (271 aa).

Positions methionine 1–arginine 112 are excised as a propeptide. Lysine 82 carries the N6-acetyllysine modification. The interval lysine 82–leucine 86 is nuclear localization signal (NLS). At serine 87 the chain carries Phosphoserine. N-linked (GlcNAc...) asparagine glycans are attached at residues asparagine 102, asparagine 121, asparagine 137, asparagine 141, and asparagine 211.

Belongs to the IL-1 family. Monomer. Interacts with TMED10; the interaction mediates the translocation from the cytoplasm into the ERGIC (endoplasmic reticulum-Golgi intermediate compartment) and thereby secretion. Interacts with IL1R1. Interacts with S100A13; this interaction is the first step in the export of IL1A, followed by direct translocation of this complex across the plasma membrane. In terms of processing, acetylated within its nuclear localization sequence, which impacts subcellular localization. Proteolytic processed by CAPN1 in a calcium-dependent manner. Cleavage from 31 kDa precursor to 18 kDa biologically active molecules. Post-translationally, phosphorylated. Phosphorylation greatly enhances susceptibility to digestion and promotes the conversion of pre-IL1A alpha to the biologically active IL1A.

Its subcellular location is the nucleus. The protein resides in the cytoplasm. The protein localises to the secreted. Functionally, cytokine constitutively present intracellularly in nearly all resting non-hematopoietic cells that plays an important role in inflammation and bridges the innate and adaptive immune systems. After binding to its receptor IL1R1 together with its accessory protein IL1RAP, forms the high affinity interleukin-1 receptor complex. Signaling involves the recruitment of adapter molecules such as MYD88, IRAK1 or IRAK4. In turn, mediates the activation of NF-kappa-B and the three MAPK pathways p38, p42/p44 and JNK pathways. Within the cell, acts as an alarmin and cell death results in its liberation in the extracellular space after disruption of the cell membrane to induce inflammation and alert the host to injury or damage. In addition to its role as a danger signal, which occurs when the cytokine is passively released by cell necrosis, directly senses DNA damage and acts as signal for genotoxic stress without loss of cell integrity. The sequence is that of Interleukin-1 alpha (IL1A) from Macaca mulatta (Rhesus macaque).